Consider the following 598-residue polypeptide: Leucine aminopeptidase 2, chloroplastic (598 aa).

The transit peptide at 1 to 71 directs the protein to the chloroplast; that stretch reads MATAASTSAA…GHRARMGHTA (71 aa). Residues Lys-367 and Asp-372 each contribute to the Mn(2+) site. Lys-379 is a catalytic residue. 3 residues coordinate Mn(2+): Asp-392, Asp-452, and Glu-454. Arg-456 is an active-site residue.

This sequence belongs to the peptidase M17 family. As to quaternary structure, homohexamer (dimer of homotrimers). Mn(2+) serves as cofactor.

The protein resides in the plastid. The protein localises to the chloroplast. It catalyses the reaction Release of an N-terminal amino acid, Xaa-|-Yaa-, in which Xaa is preferably Leu, but may be other amino acids including Pro although not Arg or Lys, and Yaa may be Pro. Amino acid amides and methyl esters are also readily hydrolyzed, but rates on arylamides are exceedingly low.. The catalysed reaction is Release of N-terminal proline from a peptide.. In terms of biological role, presumably involved in the processing and regular turnover of intracellular proteins. Catalyzes the removal of unsubstituted N-terminal amino acids from various peptides. In Oryza sativa subsp. japonica (Rice), this protein is Leucine aminopeptidase 2, chloroplastic.